Here is a 500-residue protein sequence, read N- to C-terminus: Cytochrome P450 2D26 (500 aa).

A Phosphoserine modification is found at Ser249. Residue Cys446 coordinates heme.

It belongs to the cytochrome P450 family. It depends on heme as a cofactor.

It localises to the endoplasmic reticulum membrane. The protein localises to the microsome membrane. The catalysed reaction is an organic molecule + reduced [NADPH--hemoprotein reductase] + O2 = an alcohol + oxidized [NADPH--hemoprotein reductase] + H2O + H(+). Cytochromes P450 are a group of heme-thiolate monooxygenases. In liver microsomes, this enzyme is involved in an NADPH-dependent electron transport pathway. It oxidizes a variety of structurally unrelated compounds, including steroids, fatty acids, and xenobiotics. This Mus musculus (Mouse) protein is Cytochrome P450 2D26.